A 312-amino-acid polypeptide reads, in one-letter code: Phosphatidate cytidylyltransferase (312 aa).

The interval 1–31 (MASTDPGTGTPLDESVPGIKRAMRQSTKNTP) is disordered. Helical transmembrane passes span 37-57 (LPAA…TLVF), 58-78 (APRI…HEVV), 85-105 (GYVI…WLTW), 110-130 (VGAL…RLVM), 157-177 (ATVF…LLVY), 186-206 (FCLM…GVLF), 223-243 (GFAG…TFLA), and 247-267 (PWVG…GDLV).

Belongs to the CDS family.

It localises to the cell membrane. It carries out the reaction a 1,2-diacyl-sn-glycero-3-phosphate + CTP + H(+) = a CDP-1,2-diacyl-sn-glycerol + diphosphate. It participates in phospholipid metabolism; CDP-diacylglycerol biosynthesis; CDP-diacylglycerol from sn-glycerol 3-phosphate: step 3/3. The chain is Phosphatidate cytidylyltransferase (cdsA) from Mycobacterium leprae (strain TN).